A 284-amino-acid chain; its full sequence is uncharacterized protein (284 aa).

A run of 3 helical transmembrane segments spans residues 174-194 (LFVLIVMFTTVHRVQCIYISI), 217-237 (MLIPGPGVAHTYIYVAGPGTA), and 241-261 (LIVLLLLLLCIVVAVNTSGSC).

It is found in the membrane. This is an uncharacterized protein from Saccharomyces cerevisiae (strain ATCC 204508 / S288c) (Baker's yeast).